Here is a 166-residue protein sequence, read N- to C-terminus: Small ribosomal subunit protein uS5 (166 aa).

One can recognise an S5 DRBM domain in the interval 11-74 (LVEKLVAVDR…EAARRNMITV (64 aa)).

Belongs to the universal ribosomal protein uS5 family. As to quaternary structure, part of the 30S ribosomal subunit. Contacts proteins S4 and S8.

With S4 and S12 plays an important role in translational accuracy. In terms of biological role, located at the back of the 30S subunit body where it stabilizes the conformation of the head with respect to the body. The polypeptide is Small ribosomal subunit protein uS5 (Acinetobacter baumannii (strain ATCC 17978 / DSM 105126 / CIP 53.77 / LMG 1025 / NCDC KC755 / 5377)).